The sequence spans 45 residues: uncharacterized protein (45 aa).

This is an uncharacterized protein from Haemophilus influenzae (strain ATCC 51907 / DSM 11121 / KW20 / Rd).